A 637-amino-acid chain; its full sequence is 1-deoxy-D-xylulose-5-phosphate synthase (637 aa).

Residues His-71 and Ser-112–Ala-114 each bind thiamine diphosphate. Asp-144 lines the Mg(2+) pocket. Residues Gly-145–Ala-146, Asn-173, Tyr-284, and Glu-365 contribute to the thiamine diphosphate site. Asn-173 contributes to the Mg(2+) binding site.

Belongs to the transketolase family. DXPS subfamily. In terms of assembly, homodimer. It depends on Mg(2+) as a cofactor. Thiamine diphosphate serves as cofactor.

It catalyses the reaction D-glyceraldehyde 3-phosphate + pyruvate + H(+) = 1-deoxy-D-xylulose 5-phosphate + CO2. It participates in metabolic intermediate biosynthesis; 1-deoxy-D-xylulose 5-phosphate biosynthesis; 1-deoxy-D-xylulose 5-phosphate from D-glyceraldehyde 3-phosphate and pyruvate: step 1/1. Functionally, catalyzes the acyloin condensation reaction between C atoms 2 and 3 of pyruvate and glyceraldehyde 3-phosphate to yield 1-deoxy-D-xylulose-5-phosphate (DXP). The chain is 1-deoxy-D-xylulose-5-phosphate synthase from Mycolicibacterium vanbaalenii (strain DSM 7251 / JCM 13017 / BCRC 16820 / KCTC 9966 / NRRL B-24157 / PYR-1) (Mycobacterium vanbaalenii).